Reading from the N-terminus, the 321-residue chain is Altered inheritance of mitochondria protein 18, mitochondrial (321 aa).

The transit peptide at 1-72 directs the protein to the mitochondrion; sequence MDRGRCANML…LLATSLYYRD (72 aa).

It belongs to the AIM18/AIM46 family.

It localises to the mitochondrion. In Saccharomyces cerevisiae (strain AWRI1631) (Baker's yeast), this protein is Altered inheritance of mitochondria protein 18, mitochondrial (AIM18).